A 131-amino-acid polypeptide reads, in one-letter code: Acanthoscurrin-2 (131 aa).

Position 130 is a lysine amide (K130).

Expressed in hemocytes and secreted into the plasma following bacterial immune challenge.

The protein localises to the secreted. Antimicrobial protein. Strong activity against the Gram-negative bacterium E.coli SBS363 and yeast C.albicans. No detectable activity against the Gram-positive bacterium M.luteus. In Acanthoscurria gomesiana (Tarantula spider), this protein is Acanthoscurrin-2.